A 341-amino-acid chain; its full sequence is MAKITAQLVKELRERTGAGVMDAKKALVEVDGDMDKAVQYLRDKGMAKAAKKADRVAAEGLTGVYVDGNVAAITEVNSETDFVSSNDKFVKLVNEATKTIAEGKPADMEAAEELKMADGTTLGQSFVDATATIGEKIVLRRFALEEKTDDQEFGAYQHNGGQIGVITVLEGADAATAKHLAMHIAAMSPKVISPDELDDEFITDQLAVMNHKIDQDNESRALVNKKPLPHLVYGSEKQLSDDVLAKAKEDIKAELKEEGKPEKIWDKIIPGKMQRFIDDNTQVDKQFAVLSQNYIMDDSKTVGEFLKEKGAKLVAFQRYEVGEGIEKKQEDFAAEVREQMK.

Positions 80 to 83 (TDFV) are involved in Mg(2+) ion dislocation from EF-Tu.

The protein belongs to the EF-Ts family.

Its subcellular location is the cytoplasm. In terms of biological role, associates with the EF-Tu.GDP complex and induces the exchange of GDP to GTP. It remains bound to the aminoacyl-tRNA.EF-Tu.GTP complex up to the GTP hydrolysis stage on the ribosome. In Lactobacillus johnsonii (strain CNCM I-12250 / La1 / NCC 533), this protein is Elongation factor Ts.